We begin with the raw amino-acid sequence, 188 residues long: Phosphatidylinositol N-acetylglucosaminyltransferase subunit H (188 aa).

This sequence belongs to the PIGH family. Component of the glycosylphosphatidylinositol-N-acetylglucosaminyltransferase (GPI-GnT) complex composed at least by PIGA, PIGC, PIGH, PIGP, PIGQ, PIGY and DPM2. Interacts with PIGQ.

It is found in the cytoplasm. The protein operates within glycolipid biosynthesis; glycosylphosphatidylinositol-anchor biosynthesis. Part of the glycosylphosphatidylinositol-N-acetylglucosaminyltransferase (GPI-GnT) complex that catalyzes the transfer of N-acetylglucosamine from UDP-N-acetylglucosamine to phosphatidylinositol and participates in the first step of GPI biosynthesis. This is Phosphatidylinositol N-acetylglucosaminyltransferase subunit H from Homo sapiens (Human).